Here is a 1070-residue protein sequence, read N- to C-terminus: DNA-directed RNA polymerase subunit beta (1070 aa).

Belongs to the RNA polymerase beta chain family. As to quaternary structure, in plastids the minimal PEP RNA polymerase catalytic core is composed of four subunits: alpha, beta, beta', and beta''. When a (nuclear-encoded) sigma factor is associated with the core the holoenzyme is formed, which can initiate transcription.

It localises to the plastid. Its subcellular location is the chloroplast. The catalysed reaction is RNA(n) + a ribonucleoside 5'-triphosphate = RNA(n+1) + diphosphate. Its function is as follows. DNA-dependent RNA polymerase catalyzes the transcription of DNA into RNA using the four ribonucleoside triphosphates as substrates. The sequence is that of DNA-directed RNA polymerase subunit beta from Cucumis sativus (Cucumber).